Consider the following 131-residue polypeptide: Aspartate 1-decarboxylase (131 aa).

Ser25 functions as the Schiff-base intermediate with substrate; via pyruvic acid in the catalytic mechanism. Ser25 carries the pyruvic acid (Ser) modification. Position 57 (Thr57) interacts with substrate. Tyr58 functions as the Proton donor in the catalytic mechanism. Residue 73-75 (GAA) coordinates substrate.

Belongs to the PanD family. In terms of assembly, heterooctamer of four alpha and four beta subunits. The cofactor is pyruvate. In terms of processing, is synthesized initially as an inactive proenzyme, which is activated by self-cleavage at a specific serine bond to produce a beta-subunit with a hydroxyl group at its C-terminus and an alpha-subunit with a pyruvoyl group at its N-terminus.

The protein resides in the cytoplasm. The enzyme catalyses L-aspartate + H(+) = beta-alanine + CO2. Its pathway is cofactor biosynthesis; (R)-pantothenate biosynthesis; beta-alanine from L-aspartate: step 1/1. Catalyzes the pyruvoyl-dependent decarboxylation of aspartate to produce beta-alanine. This is Aspartate 1-decarboxylase from Chlorobium phaeobacteroides (strain DSM 266 / SMG 266 / 2430).